The primary structure comprises 682 residues: MKQHQQTSIANIKGIGPETEKTLNELGIYDISDLLNYFPYRYDDYELRDLEEVKHDERVTVEGKVHSEPSLTYYGKKRNRLTFRLLVGHYLITAVCFNRPYLKKKLSLGSVVTVSGKWDKHRQTISVQELKNGPHQEDKSIEPVYSVKENVTVKMMRRFIQQALTQYADSLPDPLPEKLRKSYKLPDYYQALKAMHQPETREALKLARRRFVYEEFLLFQLKMQAFRKAEREQTQGIRQRFSNEELMRFIKSLPFPLTNAQSRVLREITADMSSPYRMNRLLQGDVGSGKTAVAAIALYAAILSGYQGALMVPTEILAEQHADSLVSLFEKWDVSVALLTSSVKGKRRKELLERLAAGEIDILVGTHALIQDEVEFKALSLVITDEQHRFGVEQRKKLRNKGQDPDVLFMTATPIPRTLAITVFGEMDVSVIDEMPAGRKRIETYWVKHDMLDRILAFVEKELKQGRQAYIICPLIEESDKLDVQNAIDVYNMLSDIFRGKWNVGLMHGKLHSDEKDQVMREFSANHCQILVSTTVVEVGVNVPNATIMVIYDADRFGLSQLHQLRGRVGRGEHQSFCILMADPKSETGKERMRIMSETNDGFELSEKDLELRGPGDFFGKKQSGMPEFKVADMVHDYRALETARQDAANLVASDAFWKEPEYAVLRDELLKSGVMDGEKLS.

Residues 46–139 (ELRDLEEVKH…LKNGPHQEDK (94 aa)) are wedge domain. One can recognise a Helicase ATP-binding domain in the interval 271 to 432 (DMSSPYRMNR…VFGEMDVSVI (162 aa)). Residue 284–291 (GDVGSGKT) coordinates ATP. The DEAH box signature appears at 385–388 (DEQH). The Helicase C-terminal domain occupies 451–611 (MLDRILAFVE…GFELSEKDLE (161 aa)).

This sequence belongs to the helicase family. RecG subfamily. In terms of assembly, monomer. Interacts with SSB (sbbA), via the latter's 6 C-terminal residues. Colocalizes with DNA pol III subunit gamma/tau (dnaX).

It localises to the cytoplasm. It is found in the nucleoid. It catalyses the reaction Couples ATP hydrolysis with the unwinding of duplex DNA by translocating in the 3'-5' direction.. The catalysed reaction is ATP + H2O = ADP + phosphate + H(+). Its activity is regulated as follows. Replication fork regression on Holliday junctions (HJ) is inhibited by DisA; DisA inhibits the ATPase activity of RecG. In terms of biological role, critical role in recombination and DNA repair. Helps process Holliday junction intermediates to mature products by catalyzing branch migration. Has a DNA unwinding activity characteristic of a DNA helicase with 3'-5' polarity. Unwinds branched duplex DNA (Y-DNA), Holliday junction (HJ) DNA and partially replicated forks as well as catalyzing fork reversal/regression. Does not seem to unwind R-loops. Inhibits the diadenylate cyclase (DAC) activity of DisA in the presence but not absence of HJ DNA, possibly by relocating DisA from the junction. The sequence is that of ATP-dependent DNA helicase RecG from Bacillus subtilis (strain 168).